A 302-amino-acid chain; its full sequence is Deoxyhypusine hydroxylase (302 aa).

Position 1 is an N-acetylmethionine (Met1). 5 HEAT-like PBS-type repeats span residues 54–80, 87–113, 174–200, 205–231, and 238–264; these read LKHE…VLQD, VRHE…YSSD, ERYR…GLHC, FRHE…ALAR, and VRHE…HADD. Residues His56, His89, and Glu90 each coordinate Fe cation. 3 residues coordinate Fe cation: His207, His240, and Glu241.

Belongs to the deoxyhypusine hydroxylase family. Fe(2+) is required as a cofactor.

The catalysed reaction is [eIF5A protein]-deoxyhypusine + AH2 + O2 = [eIF5A protein]-hypusine + A + H2O. Its pathway is protein modification; eIF5A hypusination. Catalyzes the hydroxylation of the N(6)-(4-aminobutyl)-L-lysine intermediate produced by deoxyhypusine synthase/DHPS on a critical lysine of the eukaryotic translation initiation factor 5A/eIF-5A. This is the second step of the post-translational modification of that lysine into an unusual amino acid residue named hypusine. Hypusination is unique to mature eIF-5A factor and is essential for its function. This Homo sapiens (Human) protein is Deoxyhypusine hydroxylase.